The following is a 248-amino-acid chain: tRNA N(3)-methylcytidine methyltransferase trm141 (248 aa).

S-adenosyl-L-methionine is bound by residues Trp-23, Tyr-27, Gly-63, Asp-86, Asp-112, and Ile-133.

Belongs to the methyltransferase superfamily. METL family.

Its subcellular location is the cytoplasm. The protein localises to the nucleus. The enzyme catalyses cytidine(32) in tRNA(Ser) + S-adenosyl-L-methionine = N(3)-methylcytidine(32) in tRNA(Ser) + S-adenosyl-L-homocysteine + H(+). Functionally, S-adenosyl-L-methionine-dependent methyltransferase that mediates N(3)-methylcytidine modification of residue 32 of the tRNA anticodon loop of tRNA(Ser). N(3)-methylcytidine methylation by trm141 requires the formation of N(6)-dimethylallyladenosine(37) (i6A37) by tit1 as prerequisite. Does not catalyze N(3)-methylcytidine modification of tRNA(Thr). The polypeptide is tRNA N(3)-methylcytidine methyltransferase trm141 (Schizosaccharomyces pombe (strain 972 / ATCC 24843) (Fission yeast)).